The following is a 160-amino-acid chain: Type IV major fimbrial protein FimA (160 aa).

A propeptide spans 1–7 (MKSLQKG) (leader sequence). Phenylalanine 8 is subject to N-methylphenylalanine. A helical transmembrane segment spans residues 8 to 28 (FTLIELMIVVAIIGILAAFAI). Cysteine 63 and cysteine 106 are oxidised to a cystine.

The protein belongs to the N-Me-Phe pilin family. In terms of assembly, the pili are polar flexible filaments of about 5.4 nanometers diameter and 2.5 micrometers average length; they consist of only a single polypeptide chain arranged in a helical configuration of five subunits per turn in the assembled pilus.

The protein localises to the fimbrium. Its subcellular location is the membrane. Major component of the type IV fimbriae that plays an essential role in twitching motility, natural transformation, and protease secretion. This chain is Type IV major fimbrial protein FimA (fimA), found in Dichelobacter nodosus (Bacteroides nodosus).